Consider the following 143-residue polypeptide: Ribonuclease HI (143 aa).

Positions 1–136 (MQEIEIFCDG…CDSLAKLEAQ (136 aa)) constitute an RNase H type-1 domain. 4 residues coordinate Mg(2+): aspartate 9, glutamate 47, aspartate 69, and aspartate 128.

It belongs to the RNase H family. Monomer. Mg(2+) serves as cofactor.

Its subcellular location is the cytoplasm. It catalyses the reaction Endonucleolytic cleavage to 5'-phosphomonoester.. Endonuclease that specifically degrades the RNA of RNA-DNA hybrids. The protein is Ribonuclease HI (rnhA) of Helicobacter pylori (strain ATCC 700392 / 26695) (Campylobacter pylori).